A 437-amino-acid chain; its full sequence is Repulsive guidance molecule B (437 aa).

The N-terminal stretch at 1-45 is a signal peptide; the sequence is MGLRAAPSSAAAAAAEVEQRRSPGLCPPPLELLLLLLFSLGLLHA. Residue N120 is glycosylated (N-linked (GlcNAc...) asparagine). A compositionally biased stretch (polar residues) spans 121 to 133; sequence CSKDGPTSSTNPE. The tract at residues 121–153 is disordered; the sequence is CSKDGPTSSTNPEVTHDPCNYHSHAGAREHRRG. 2 disulfide bridges follow: C139/C226 and C163/C312. N383 carries N-linked (GlcNAc...) asparagine glycosylation. N413 carries the GPI-anchor amidated asparagine lipid modification. Residues 414-437 constitute a propeptide, removed in mature form; the sequence is GTPRGGSDLSVSLGLTCLILIVFL.

It belongs to the repulsive guidance molecule (RGM) family. In terms of assembly, homooligomer. Interacts with DRGX. Interacts with BMP2 and BMP4. Interacts with the BMP type I receptors ACVR1, BMPR1A and BMPR1B and with the BMP type II receptor ACVR2B. The functional complex with its receptor NEO1/neogenin appears to be a heterotetramer with a 2:2 stoichiometry, RGM molecules acting as staples that bring two NEO1 receptors together without interacting themselves, this arrangement leads to activation of downstream signaling via RhoA. In terms of processing, GPI-anchored. Post-translationally, autocatalytically cleaved at low pH; the two chains remain linked via two disulfide bonds.

It is found in the cell membrane. Its subcellular location is the membrane raft. In terms of biological role, member of the repulsive guidance molecule (RGM) family that contributes to the patterning of the developing nervous system. Acts as a bone morphogenetic protein (BMP) coreceptor that potentiates BMP signaling. Promotes neuronal adhesion. May inhibit neurite outgrowth. The protein is Repulsive guidance molecule B of Homo sapiens (Human).